The sequence spans 229 residues: Ribonuclease 3 (229 aa).

The RNase III domain maps to 2 to 130 (FEKLQDVLCY…ILGAIFLDGG (129 aa)). Glutamate 43 is a Mg(2+) binding site. Residue aspartate 47 is part of the active site. The Mg(2+) site is built by aspartate 116 and glutamate 119. Glutamate 119 is an active-site residue. One can recognise a DRBM domain in the interval 157–226 (DAKSTLQELT…AGLALELLEG (70 aa)).

The protein belongs to the ribonuclease III family. In terms of assembly, homodimer. Mg(2+) serves as cofactor.

It is found in the cytoplasm. It catalyses the reaction Endonucleolytic cleavage to 5'-phosphomonoester.. In terms of biological role, digests double-stranded RNA. Involved in the processing of primary rRNA transcript to yield the immediate precursors to the large and small rRNAs (23S and 16S). Processes some mRNAs, and tRNAs when they are encoded in the rRNA operon. Processes pre-crRNA and tracrRNA of type II CRISPR loci if present in the organism. The sequence is that of Ribonuclease 3 from Oleidesulfovibrio alaskensis (strain ATCC BAA-1058 / DSM 17464 / G20) (Desulfovibrio alaskensis).